A 348-amino-acid polypeptide reads, in one-letter code: Anthranilate phosphoribosyltransferase (348 aa).

Residues Gly-84, Gly-87 to Asp-88, Thr-92, Asn-94 to Thr-97, Lys-112 to Ser-120, and Ser-124 contribute to the 5-phospho-alpha-D-ribose 1-diphosphate site. Gly-84 provides a ligand contact to anthranilate. Thr-96 serves as a coordination point for Mg(2+). Asn-115 contributes to the anthranilate binding site. Arg-170 contributes to the anthranilate binding site. Positions 228 and 229 each coordinate Mg(2+).

This sequence belongs to the anthranilate phosphoribosyltransferase family. Homodimer. It depends on Mg(2+) as a cofactor.

The enzyme catalyses N-(5-phospho-beta-D-ribosyl)anthranilate + diphosphate = 5-phospho-alpha-D-ribose 1-diphosphate + anthranilate. The protein operates within amino-acid biosynthesis; L-tryptophan biosynthesis; L-tryptophan from chorismate: step 2/5. Functionally, catalyzes the transfer of the phosphoribosyl group of 5-phosphorylribose-1-pyrophosphate (PRPP) to anthranilate to yield N-(5'-phosphoribosyl)-anthranilate (PRA). This is Anthranilate phosphoribosyltransferase from Corynebacterium glutamicum (strain R).